A 148-amino-acid polypeptide reads, in one-letter code: Deoxyuridine 5'-triphosphate nucleotidohydrolase (148 aa).

Residues 67–69, asparagine 80, 84–86, and methionine 94 contribute to the substrate site; these read RSG and LID.

The protein belongs to the dUTPase family. Mg(2+) serves as cofactor.

The catalysed reaction is dUTP + H2O = dUMP + diphosphate + H(+). The protein operates within pyrimidine metabolism; dUMP biosynthesis; dUMP from dCTP (dUTP route): step 2/2. In terms of biological role, this enzyme is involved in nucleotide metabolism: it produces dUMP, the immediate precursor of thymidine nucleotides and it decreases the intracellular concentration of dUTP so that uracil cannot be incorporated into DNA. The sequence is that of Deoxyuridine 5'-triphosphate nucleotidohydrolase from Burkholderia thailandensis (strain ATCC 700388 / DSM 13276 / CCUG 48851 / CIP 106301 / E264).